The sequence spans 693 residues: Sodium-dependent phosphate transport protein 2B (693 aa).

The disordered stretch occupies residues 1 to 46 (MAPWPELENSQPTSEKYTVKADGEQSAKPEKAKETEKDDTGTPITK). Over 1–89 (MAPWPELENS…KWSERDTKGK (89 aa)) the chain is Cytoplasmic. Positions 17–40 (YTVKADGEQSAKPEKAKETEKDDT) are enriched in basic and acidic residues. The helical transmembrane segment at 90-110 (ILCVFQGIGKFILLLVFLYFF) threads the bilayer. Residues 111–135 (VCSLDVLSSAFQLVGGKVAGKFFNN) lie on the Extracellular side of the membrane. Residues 136–156 (NSIMSNPLAGMVIGVLVTVLV) form a helical membrane-spanning segment. The Cytoplasmic portion of the chain corresponds to 157-212 (QSSSTSTSIVVSMVASSLLPVHAAIPIIMGANIGTSITNTIVALMQAGDRKEFRRA). Residues 213–233 (FAGATVHDFFNWLSVLVLLPL) form a helical membrane-spanning segment. The Extracellular portion of the chain corresponds to 234–361 (EAATGYLERL…IFVNFNLSDA (128 aa)). Cysteine 302 and cysteine 349 form a disulfide bridge. Asparagine 307 and asparagine 320 each carry an N-linked (GlcNAc...) asparagine glycan. A helical membrane pass occupies residues 362–382 (IVGTILLITSLLILCTCLILI). Residues 383 to 408 (VKLLGSVLRGQVAAVIKKTINTDFPY) lie on the Cytoplasmic side of the membrane. Residues 409-429 (PFSWVTGYLAILVGAGMTFIV) form a helical membrane-spanning segment. The Extracellular portion of the chain corresponds to 430-485 (QSSSVFTSAMTPLIGIGVISIQRAYPLTLGANIGTTTTAILAALASPGSTLKSSLQ). Residues 486-506 (IALCHFFFNISGIILWYPIPF) traverse the membrane as a helical segment. Over 507–525 (TRLPIRLAKGLGNISSKYR) the chain is Cytoplasmic. The chain crosses the membrane as a helical span at residues 526-546 (WFAIVYLIVFFLLIPLAVFGL). The Extracellular portion of the chain corresponds to 547–550 (SLIG). A helical membrane pass occupies residues 551–571 (WPVLVGVASPIVLVILLVVVL). Residues 572–693 (KILQSFCPGS…TKIVSSVTAL (122 aa)) lie on the Cytoplasmic side of the membrane.

The protein belongs to the SLC34A transporter family. Post-translationally, glycosylated.

It localises to the apical cell membrane. The catalysed reaction is 3 Na(+)(out) + phosphate(out) = 3 Na(+)(in) + phosphate(in). Its function is as follows. Involved in actively transporting phosphate into cells via Na(+) cotransport. This is Sodium-dependent phosphate transport protein 2B (SLC34A2) from Bos taurus (Bovine).